The primary structure comprises 474 residues: Citrate synthase, mitochondrial (474 aa).

The transit peptide at 1–35 (MASTLRLSTSALRSSTLAGKPVVQSVAFNGLRCYS) directs the protein to the mitochondrion. Residues His310, His356, and Asp411 contribute to the active site.

The protein belongs to the citrate synthase family.

The protein localises to the mitochondrion matrix. The catalysed reaction is oxaloacetate + acetyl-CoA + H2O = citrate + CoA + H(+). The protein operates within carbohydrate metabolism; tricarboxylic acid cycle; isocitrate from oxaloacetate: step 1/2. The protein is Citrate synthase, mitochondrial (citA) of Emericella nidulans (strain FGSC A4 / ATCC 38163 / CBS 112.46 / NRRL 194 / M139) (Aspergillus nidulans).